The sequence spans 265 residues: Protein Pars_0096 (265 aa).

The protein belongs to the CinA family.

The protein is Protein Pars_0096 of Pyrobaculum arsenaticum (strain DSM 13514 / JCM 11321 / PZ6).